We begin with the raw amino-acid sequence, 945 residues long: Isoleucine--tRNA ligase 1 (945 aa).

The 'HIGH' region signature appears at 66-76 (PYANGDIHLGH). E581 is a binding site for L-isoleucyl-5'-AMP. A 'KMSKS' region motif is present at residues 622 to 626 (KMSKS). Position 625 (K625) interacts with ATP. Zn(2+)-binding residues include C908, C911, C928, and C931.

This sequence belongs to the class-I aminoacyl-tRNA synthetase family. IleS type 1 subfamily. In terms of assembly, monomer. Zn(2+) is required as a cofactor.

The protein localises to the cytoplasm. The enzyme catalyses tRNA(Ile) + L-isoleucine + ATP = L-isoleucyl-tRNA(Ile) + AMP + diphosphate. Catalyzes the attachment of isoleucine to tRNA(Ile). As IleRS can inadvertently accommodate and process structurally similar amino acids such as valine, to avoid such errors it has two additional distinct tRNA(Ile)-dependent editing activities. One activity is designated as 'pretransfer' editing and involves the hydrolysis of activated Val-AMP. The other activity is designated 'posttransfer' editing and involves deacylation of mischarged Val-tRNA(Ile). The chain is Isoleucine--tRNA ligase 1 from Burkholderia mallei (strain ATCC 23344).